The sequence spans 349 residues: E3 ubiquitin-protein ligase SINA-like 10 (349 aa).

Residues methionine 1 to valine 77 are disordered. The RING-type; degenerate zinc finger occupies cysteine 113–threonine 149. The segment at valine 163–arginine 344 is SBD. The segment at alanine 166–lysine 224 adopts an SIAH-type zinc-finger fold. 8 residues coordinate Zn(2+): cysteine 171, cysteine 178, histidine 190, cysteine 194, cysteine 201, cysteine 206, histidine 218, and histidine 223.

It belongs to the SINA (Seven in absentia) family.

The catalysed reaction is S-ubiquitinyl-[E2 ubiquitin-conjugating enzyme]-L-cysteine + [acceptor protein]-L-lysine = [E2 ubiquitin-conjugating enzyme]-L-cysteine + N(6)-ubiquitinyl-[acceptor protein]-L-lysine.. Its pathway is protein modification; protein ubiquitination. Functionally, E3 ubiquitin-protein ligase that mediates ubiquitination and subsequent proteasomal degradation of target proteins. E3 ubiquitin ligases accept ubiquitin from an E2 ubiquitin-conjugating enzyme in the form of a thioester and then directly transfers the ubiquitin to targeted substrates. It probably triggers the ubiquitin-mediated degradation of different substrates. This chain is E3 ubiquitin-protein ligase SINA-like 10, found in Arabidopsis thaliana (Mouse-ear cress).